We begin with the raw amino-acid sequence, 201 residues long: MELVITGSNNKVSVSDAVFGREFSEDLVHQVVVAYRNAGRAGTKAQKTRSEVAGTTKKSKKQKGGGARHGALTAPIFVGGGVTFAAKPRSFEQKVNRKMYRAAICAIFSELNRQGRLMIVDAFDLEATKTKGLIEKLKGLEVGKRPLIVTEEASEHLYLSARNLPYVQVRDVQGLDPVALVGADTVVITADAVKKVEEWLA.

A disordered region spans residues 44-68; sequence KAQKTRSEVAGTTKKSKKQKGGGAR.

It belongs to the universal ribosomal protein uL4 family. Part of the 50S ribosomal subunit.

Its function is as follows. One of the primary rRNA binding proteins, this protein initially binds near the 5'-end of the 23S rRNA. It is important during the early stages of 50S assembly. It makes multiple contacts with different domains of the 23S rRNA in the assembled 50S subunit and ribosome. In terms of biological role, forms part of the polypeptide exit tunnel. The sequence is that of Large ribosomal subunit protein uL4 from Xanthomonas axonopodis pv. citri (strain 306).